The sequence spans 292 residues: Zinc metalloproteinase nas-3 (292 aa).

Positions 1–16 (MYRFIIFFSLLALTAS) are cleaved as a signal peptide. Residues 56 to 249 (RGIAIHPWQW…RNINTLYKCN (194 aa)) enclose the Peptidase M12A domain. 2 disulfides stabilise this stretch: cysteine 103–cysteine 248 and cysteine 128–cysteine 158. Histidine 169 lines the Zn(2+) pocket. Residue glutamate 170 is part of the active site. 2 residues coordinate Zn(2+): histidine 173 and histidine 179.

Zn(2+) serves as cofactor.

It localises to the secreted. Metalloprotease. In Caenorhabditis elegans, this protein is Zinc metalloproteinase nas-3 (nas-3).